The sequence spans 408 residues: Bifunctional enzyme IspD/IspF (408 aa).

The tract at residues 1-247 (MNAPFEKDRR…GPAMTELPDI (247 aa)) is 2-C-methyl-D-erythritol 4-phosphate cytidylyltransferase. The interval 248-408 (RVGNGYDVHG…TVAYPGSLGN (161 aa)) is 2-C-methyl-D-erythritol 2,4-cyclodiphosphate synthase. A divalent metal cation-binding residues include Asp254 and His256. Residues 254-256 (DVH) and 280-281 (HS) each bind 4-CDP-2-C-methyl-D-erythritol 2-phosphate. His288 lines the a divalent metal cation pocket. 4-CDP-2-C-methyl-D-erythritol 2-phosphate contacts are provided by residues 302-304 (DIG), 378-381 (TTNE), Phe385, and Arg388.

This sequence in the N-terminal section; belongs to the IspD/TarI cytidylyltransferase family. IspD subfamily. In the C-terminal section; belongs to the IspF family. A divalent metal cation serves as cofactor.

The catalysed reaction is 2-C-methyl-D-erythritol 4-phosphate + CTP + H(+) = 4-CDP-2-C-methyl-D-erythritol + diphosphate. It catalyses the reaction 4-CDP-2-C-methyl-D-erythritol 2-phosphate = 2-C-methyl-D-erythritol 2,4-cyclic diphosphate + CMP. The protein operates within isoprenoid biosynthesis; isopentenyl diphosphate biosynthesis via DXP pathway; isopentenyl diphosphate from 1-deoxy-D-xylulose 5-phosphate: step 2/6. It participates in isoprenoid biosynthesis; isopentenyl diphosphate biosynthesis via DXP pathway; isopentenyl diphosphate from 1-deoxy-D-xylulose 5-phosphate: step 4/6. Functionally, bifunctional enzyme that catalyzes the formation of 4-diphosphocytidyl-2-C-methyl-D-erythritol from CTP and 2-C-methyl-D-erythritol 4-phosphate (MEP) (IspD), and catalyzes the conversion of 4-diphosphocytidyl-2-C-methyl-D-erythritol 2-phosphate (CDP-ME2P) to 2-C-methyl-D-erythritol 2,4-cyclodiphosphate (ME-CPP) with a corresponding release of cytidine 5-monophosphate (CMP) (IspF). This Chelativorans sp. (strain BNC1) protein is Bifunctional enzyme IspD/IspF.